Here is a 367-residue protein sequence, read N- to C-terminus: C-X-C chemokine receptor type 3 (367 aa).

The Extracellular portion of the chain corresponds to 1–56 (MYLEVSERQVLDASDIAFLLENSTSPYDYGENESDFSDSPPCPQDFSLNFDRTFLP). A glycan (N-linked (GlcNAc...) asparagine) is linked at asparagine 22. Residues tyrosine 27 and tyrosine 29 each carry the sulfotyrosine modification. Residue asparagine 32 is glycosylated (N-linked (GlcNAc...) asparagine). Residues 57-77 (VLYSLLFLLGLLGNGAVAAVL) traverse the membrane as a helical segment. Residues 78–89 (LSQRTALSSTDT) are Cytoplasmic-facing. The helical transmembrane segment at 90 to 110 (FLLHLAVADVLLVLTLPLWAV) threads the bilayer. Residues 111-125 (DAAAQWVFGSGLCKV) lie on the Extracellular side of the membrane. A disulfide bond links cysteine 123 and cysteine 202. Residues 126–146 (AGALFNINFYAGAFLLACISF) traverse the membrane as a helical segment. At 147 to 168 (DRYLSIVHATQIYRRDPWVRVA) the chain is on the cytoplasmic side. The chain crosses the membrane as a helical span at residues 169–189 (LTCIVVWGLCVLFALPDFIFL). Over 190–222 (SASHDQRLNATHCQYNFPQVGRTALRVLQLVAG) the chain is Extracellular. An N-linked (GlcNAc...) asparagine glycan is attached at asparagine 198. The chain crosses the membrane as a helical span at residues 223 to 243 (FLMPLLVMAYCYAHILAVLLV). Over 244-255 (SRGQRRFRAMRL) the chain is Cytoplasmic. Residues 256–276 (VVVVVVAFAVCWTPYHLVVLV) form a helical membrane-spanning segment. Topologically, residues 277 to 300 (DILMDVGVLARNCGRESHVDVAKS) are extracellular. Residues 301–321 (VTSGMGYMHCCLNPLLYAFVG) traverse the membrane as a helical segment. The Cytoplasmic segment spans residues 322–367 (VKFKEQMWMLLMRLGRSDQRGPQRQPSSSRRESSWSETTEASYLGL). The disordered stretch occupies residues 339 to 367 (DQRGPQRQPSSSRRESSWSETTEASYLGL).

The protein belongs to the G-protein coupled receptor 1 family. As to quaternary structure, homomer. Forms heteromers with ACKR4. Interacts with PF4/CXCL4. Post-translationally, sulfation on Tyr-27 and Tyr-29 is essential for CXCL10 binding. In terms of processing, N-glycosylated.

It is found in the cell membrane. Functionally, receptor for the C-X-C chemokine CXCL9, CXCL10 and CXCL11 and mediates the proliferation, survival and angiogenic activity of mesangial cells through a heterotrimeric G-protein signaling pathway. Probably promotes cell chemotaxis response. Binds to CCL21. Upon activation by PF4, induces activated T-lymphocytes migration mediated via downstream Ras/extracellular signal-regulated kinase (ERK) signaling. The sequence is that of C-X-C chemokine receptor type 3 (Cxcr3) from Rattus norvegicus (Rat).